A 288-amino-acid polypeptide reads, in one-letter code: Quinate/shikimate dehydrogenase (288 aa).

2 residues coordinate substrate: lysine 71 and aspartate 107. NAD(+) contacts are provided by residues 132 to 135 (AGGA), 155 to 158 (NRRD), lysine 205, 232 to 235 (CVYN), and glycine 255.

The protein belongs to the shikimate dehydrogenase family. As to quaternary structure, homodimer.

The catalysed reaction is L-quinate + NAD(+) = 3-dehydroquinate + NADH + H(+). The enzyme catalyses L-quinate + NADP(+) = 3-dehydroquinate + NADPH + H(+). It catalyses the reaction shikimate + NADP(+) = 3-dehydroshikimate + NADPH + H(+). It carries out the reaction shikimate + NAD(+) = 3-dehydroshikimate + NADH + H(+). It participates in metabolic intermediate biosynthesis; chorismate biosynthesis; chorismate from D-erythrose 4-phosphate and phosphoenolpyruvate: step 4/7. In terms of biological role, the actual biological function of YdiB remains unclear, nor is it known whether 3-dehydroshikimate or quinate represents the natural substrate. Catalyzes the reversible NAD-dependent reduction of both 3-dehydroshikimate (DHSA) and 3-dehydroquinate to yield shikimate (SA) and quinate, respectively. It can use both NAD or NADP for catalysis, however it has higher catalytic efficiency with NAD. This Escherichia coli (strain 55989 / EAEC) protein is Quinate/shikimate dehydrogenase.